A 432-amino-acid polypeptide reads, in one-letter code: Killer cell immunoglobulin-like receptor 3DL1 (432 aa).

Positions 1-21 are cleaved as a signal peptide; it reads MLLWFLSLVCSGFFLVQRMSA. The Extracellular portion of the chain corresponds to 22 to 335; the sequence is HVGSHDKPFL…ADTKTNNYKN (314 aa). 3 Ig-like C2-type domains span residues 42 to 100, 135 to 202, and 238 to 301; these read GQNV…HPQY, GGNV…NSYY, and GETM…FRNA. An N-linked (GlcNAc...) asparagine glycan is attached at N44. A disulfide bridge links C49 with C95. An N-linked (GlcNAc...) asparagine glycan is attached at N137. Cystine bridges form between C142-C195 and C245-C294. N-linked (GlcNAc...) asparagine glycosylation occurs at N300. Residues 336 to 356 traverse the membrane as a helical segment; that stretch reads LHILTGLLVTMVLVVIIIFYS. Over 357–432 the chain is Cytoplasmic; the sequence is CYFSKQNKSQ…DTIVYMEIMK (76 aa).

This sequence belongs to the immunoglobulin superfamily.

It is found in the cell membrane. Receptor on natural killer (NK) cells. Inhibits the activity of NK cells thus preventing cell lysis. The polypeptide is Killer cell immunoglobulin-like receptor 3DL1 (Kir3dl1) (Mus musculus (Mouse)).